Here is a 367-residue protein sequence, read N- to C-terminus: GTP cyclohydrolase FolE2 (367 aa).

The protein belongs to the GTP cyclohydrolase IV family.

The enzyme catalyses GTP + H2O = 7,8-dihydroneopterin 3'-triphosphate + formate + H(+). Its pathway is cofactor biosynthesis; 7,8-dihydroneopterin triphosphate biosynthesis; 7,8-dihydroneopterin triphosphate from GTP: step 1/1. Converts GTP to 7,8-dihydroneopterin triphosphate. The chain is GTP cyclohydrolase FolE2 from Dinoroseobacter shibae (strain DSM 16493 / NCIMB 14021 / DFL 12).